The primary structure comprises 841 residues: DNA ligase (841 aa).

Residues 33-37 (DAQYD), 82-83 (SL), and Glu114 each bind NAD(+). The active-site N6-AMP-lysine intermediate is Lys116. NAD(+)-binding residues include Arg137, Glu174, Lys300, and Lys324. Zn(2+) is bound by residues Cys418, Cys421, Cys436, and Cys442. The region spanning 758-841 (EKTGPLDGQT…AFLGEHGQQR (84 aa)) is the BRCT domain.

The protein belongs to the NAD-dependent DNA ligase family. LigA subfamily. Mg(2+) is required as a cofactor. Requires Mn(2+) as cofactor.

The catalysed reaction is NAD(+) + (deoxyribonucleotide)n-3'-hydroxyl + 5'-phospho-(deoxyribonucleotide)m = (deoxyribonucleotide)n+m + AMP + beta-nicotinamide D-nucleotide.. Its function is as follows. DNA ligase that catalyzes the formation of phosphodiester linkages between 5'-phosphoryl and 3'-hydroxyl groups in double-stranded DNA using NAD as a coenzyme and as the energy source for the reaction. It is essential for DNA replication and repair of damaged DNA. This is DNA ligase from Xanthomonas oryzae pv. oryzae (strain KACC10331 / KXO85).